The chain runs to 180 residues: Sec-independent protein translocase protein TatB (180 aa).

A helical transmembrane segment spans residues 1-21 (MFDIGWSELLVIGVVALIAIG). The tract at residues 95 to 180 (IEGVDKPVES…AERLKDAKAS (86 aa)) is disordered. Low complexity predominate over residues 103 to 123 (ESQPAASAAPETSATVEAPAT). Residues 170–180 (EAERLKDAKAS) show a composition bias toward basic and acidic residues.

The protein belongs to the TatB family. In terms of assembly, the Tat system comprises two distinct complexes: a TatABC complex, containing multiple copies of TatA, TatB and TatC subunits, and a separate TatA complex, containing only TatA subunits. Substrates initially bind to the TatABC complex, which probably triggers association of the separate TatA complex to form the active translocon.

The protein resides in the cell inner membrane. Part of the twin-arginine translocation (Tat) system that transports large folded proteins containing a characteristic twin-arginine motif in their signal peptide across membranes. Together with TatC, TatB is part of a receptor directly interacting with Tat signal peptides. TatB may form an oligomeric binding site that transiently accommodates folded Tat precursor proteins before their translocation. The polypeptide is Sec-independent protein translocase protein TatB (Bradyrhizobium sp. (strain BTAi1 / ATCC BAA-1182)).